The primary structure comprises 556 residues: MKTDIEIAQSVELKPITEVVEKVGIGFDDLELYGKYKAKLSFDKINEVKDDKPGKLILVTAINPTPAGEGKSTMSIGLADALNKIGKKTMIALREPSLGPVMGIKGGAAGGGYAQVLPMEDINLHFTGDMHAITTANNALSALLDNHIHQGNALGIDQRRIIWKRVVDLNDRALRHVTVGLGGPLNGIPREDGFDITVASEIMAILCLATDINDLKERLANIVVAYRYDRTPVYVRDLEIEGALTLILKDAIKPNLVQTIYGTPALVHGGPFANIAHGCNSVLATSTALRLADYTVTEAGFGADLGAEKFLDIKTPNLPTTPDAVVIVATLRALKMHGGVAKTDLSEENVQAVRDGFSNLKRHVENIRKFGIPVVVAINEFVADTEAEIAALKELCSEIKVPVELASVWANGADGGIDLANTVVDVVENGNADYKRLYSDDDSLEEKITKIVTEIYGGKSVVFEKKAKNQLKQFAEFGWDKLPVCMAKTQYSFSDNQFLLGAPEGFDITIREFVPKTGAGFIVALTGDVMTMPGLPKAPAALKMDVTEDGTAVGLF.

65 to 72 contributes to the ATP binding site; sequence TPAGEGKS.

This sequence belongs to the formate--tetrahydrofolate ligase family.

The catalysed reaction is (6S)-5,6,7,8-tetrahydrofolate + formate + ATP = (6R)-10-formyltetrahydrofolate + ADP + phosphate. Its pathway is one-carbon metabolism; tetrahydrofolate interconversion. This Streptococcus thermophilus (strain CNRZ 1066) protein is Formate--tetrahydrofolate ligase.